Reading from the N-terminus, the 458-residue chain is Brassinosteroid-related acyltransferase 1 (458 aa).

Residue histidine 164 is the Proton acceptor of the active site.

The protein belongs to the plant acyltransferase family. Highly expressed in young tissues and vascular bundles. Mostly expressed in young leaves, primary roots, flowers (including petals and sepals), and siliques.

Its subcellular location is the endoplasmic reticulum. The protein resides in the nucleus. The protein operates within plant hormone biosynthesis; brassinosteroid biosynthesis. Its function is as follows. Brassinosteroids (BR) acyltransferase with acyl-CoA ligase activity toward brassinolide (BL), castasterone (CS), typhasterol (TY), 6-deoxotyphasterol (6-deoxoTY), and 6-deoxocastasterone (6-deoxoCS) and thus converts them to corresponding lauroyl esters. Regulates BR homeostasis and promotes BR-mediated cell growth regulation. Involved in vascular bundle development. This is Brassinosteroid-related acyltransferase 1 from Arabidopsis thaliana (Mouse-ear cress).